Reading from the N-terminus, the 235-residue chain is Large ribosomal subunit protein uL1 (235 aa).

This sequence belongs to the universal ribosomal protein uL1 family. As to quaternary structure, part of the 50S ribosomal subunit.

Functionally, binds directly to 23S rRNA. The L1 stalk is quite mobile in the ribosome, and is involved in E site tRNA release. In terms of biological role, protein L1 is also a translational repressor protein, it controls the translation of the L11 operon by binding to its mRNA. The sequence is that of Large ribosomal subunit protein uL1 from Lawsonia intracellularis (strain PHE/MN1-00).